We begin with the raw amino-acid sequence, 21 residues long: Dahlein-5.6 (21 aa).

Expressed by the skin dorsal glands.

Its subcellular location is the secreted. Functionally, has no antimicrobial activity. Strongly inhibits the formation of NO by neuronal nitric oxide synthase at micromolar concentrations. This is Dahlein-5.6 from Ranoidea dahlii (Dahl's aquatic frog).